The sequence spans 597 residues: Nucleolar protein 58 (597 aa).

One can recognise a Nop domain in the interval 285 to 410 (IAPNMTELVG…LENNLRQLEG (126 aa)). The disordered stretch occupies residues 452–597 (AEAPKKPLIQ…KKKKKKSSKE (146 aa)). The span at 482 to 499 (KSKKDKKEKKEKKDKKAK) shows a compositional bias: basic residues. Over residues 532-551 (IKEDGTLEILSKKDFKGKDA) the composition is skewed to basic and acidic residues. The segment covering 552 to 561 (EAEEEAEEEE) has biased composition (acidic residues). Positions 588 to 597 (KKKKKKSSKE) are enriched in basic residues.

Belongs to the NOP5/NOP56 family.

The protein localises to the nucleus. Its subcellular location is the nucleolus. Its function is as follows. Required for pre-18S rRNA processing. May bind microtubules. This Neurospora crassa (strain ATCC 24698 / 74-OR23-1A / CBS 708.71 / DSM 1257 / FGSC 987) protein is Nucleolar protein 58 (nop-58).